The following is a 234-amino-acid chain: Core atranone cluster (CAC) protein 1 (234 aa).

Its pathway is mycotoxin biosynthesis. Part of the core atranone cluster (CAC) which products are predicted to catalyze most or all steps of mycotoxin atranone synthesis, starting from geranylgeranyl pyrophosphate (GGPP). The initial cyclization of GGPP to dolabellane is probably performed by the terpene cyclase ATR13. The Baeyer-Villiger oxidation near the end of the atranone synthesis, which converts atranones D and E to atranones F and G is predicted to be catalyzed by the monooxygenase ATR8. Of the CAC's other predicted gene products, the reducing PKS ATR6 might synthesize a polyketide chain. This polyketide is probably transferred onto the atranone backbone by the polyketide transferase ATR5. Other predicted CAC products include 4 oxygenases (ATR2, ATR3, ATR4, and ATR14), 3 short-chain reductases (ATR7, ATR9, and ATR10), and a methyltransferase (ATR12). These may all be involved in the various steps of atranone biosynthesis, although their specific roles must await experimental determination. The polypeptide is Core atranone cluster (CAC) protein 1 (Stachybotrys chlorohalonatus (strain IBT 40285)).